Consider the following 216-residue polypeptide: Imidazole glycerol phosphate synthase subunit HisH (216 aa).

A Glutamine amidotransferase type-1 domain is found at Arg-2–Pro-216. The active-site Nucleophile is Cys-88. Catalysis depends on residues His-196 and Glu-198.

In terms of assembly, heterodimer of HisH and HisF.

The protein localises to the cytoplasm. The catalysed reaction is 5-[(5-phospho-1-deoxy-D-ribulos-1-ylimino)methylamino]-1-(5-phospho-beta-D-ribosyl)imidazole-4-carboxamide + L-glutamine = D-erythro-1-(imidazol-4-yl)glycerol 3-phosphate + 5-amino-1-(5-phospho-beta-D-ribosyl)imidazole-4-carboxamide + L-glutamate + H(+). It carries out the reaction L-glutamine + H2O = L-glutamate + NH4(+). It participates in amino-acid biosynthesis; L-histidine biosynthesis; L-histidine from 5-phospho-alpha-D-ribose 1-diphosphate: step 5/9. Functionally, IGPS catalyzes the conversion of PRFAR and glutamine to IGP, AICAR and glutamate. The HisH subunit catalyzes the hydrolysis of glutamine to glutamate and ammonia as part of the synthesis of IGP and AICAR. The resulting ammonia molecule is channeled to the active site of HisF. The chain is Imidazole glycerol phosphate synthase subunit HisH from Mesorhizobium japonicum (strain LMG 29417 / CECT 9101 / MAFF 303099) (Mesorhizobium loti (strain MAFF 303099)).